The chain runs to 430 residues: Trigger factor (430 aa).

The PPIase FKBP-type domain maps to 163–248 (GNIAIIDFKG…IKDIKVKELP (86 aa)).

This sequence belongs to the FKBP-type PPIase family. Tig subfamily.

The protein resides in the cytoplasm. The catalysed reaction is [protein]-peptidylproline (omega=180) = [protein]-peptidylproline (omega=0). Functionally, involved in protein export. Acts as a chaperone by maintaining the newly synthesized protein in an open conformation. Functions as a peptidyl-prolyl cis-trans isomerase. The protein is Trigger factor of Clostridium botulinum (strain Kyoto / Type A2).